The chain runs to 221 residues: uncharacterized protein (221 aa).

The Peptidase S8 domain occupies 1-189 (MDSGKDTNGY…NVVYCSEKAV (189 aa)).

The protein belongs to the peptidase S8 family.

This is an uncharacterized protein from Aquifex aeolicus (strain VF5).